A 956-amino-acid chain; its full sequence is UvrABC system protein A (956 aa).

Residue 33 to 40 (GLSGSGKS) participates in ATP binding. A C4-type zinc finger spans residues 252–279 (CPYCGFSVGELEPRMFSFNSPFGACPTC). ABC transporter domains follow at residues 309–587 (WRPI…KNSI) and 607–936 (GNGL…KYLK). 639–646 (GVSGSGKS) lines the ATP pocket. Residues 738 to 764 (CEACKGDGIIKIEMHFLPDVYVPCEVC) form a C4-type zinc finger.

Belongs to the ABC transporter superfamily. UvrA family. Forms a heterotetramer with UvrB during the search for lesions.

The protein resides in the cytoplasm. The UvrABC repair system catalyzes the recognition and processing of DNA lesions. UvrA is an ATPase and a DNA-binding protein. A damage recognition complex composed of 2 UvrA and 2 UvrB subunits scans DNA for abnormalities. When the presence of a lesion has been verified by UvrB, the UvrA molecules dissociate. This Listeria monocytogenes serovar 1/2a (strain ATCC BAA-679 / EGD-e) protein is UvrABC system protein A.